Reading from the N-terminus, the 1733-residue chain is MADVAESQENAPAERAELTVPEMRQWLRNWVGKAVGKAPDSIDESVPMVELGLSSRDAVAMAADIEDLTGVTLSVAVAFAHPTIESLATRIIEGEPETDLAGDDAEDWSRTGPAERVDIAIVGLSTRFPGEMNTPEQTWQALLEGRDGITDLPDGRWSEFLEEPRLAARVAGARTRGGYLKDIKGFDSEFFAVAKTEADNIDPQQRMALELTWEALEHARIPASSLRGQAVGVYIGSSTNDYSFLAVSDPTVAHPYAITGTSSSIIANRVSYFYDFHGPSVTIDTACSSSLVAIHQGVQALRNGEADVVVAGGVNALITPMVTLGFDEIGAVLAPDGRIKSFSADADGYTRSEGGGMLVLKRVDDARRDGDAILAVIAGSAVNHDGRSNGLIAPNQDAQADVLRRAYKDAGIDPRTVDYIEAHGTGTILGDPIEAEALGRVVGRGRPADRPALLGAVKTNVGHLESAAGAASMAKVVLALQHDKLPPSINFAGPSPYIDFDAMRLKMITTPTDWPRYGGYALAGVSSFGFGGANAHVVVREVLPRDVVEKEPEPEPEPKAAAEPAEAPTLAGHALRFDEFGNIITDSAVAEEPEPELPGVTEEALRLKEAALEELAAQEVTAPLVPLAVSAFLTSRKKAAAAELADWMQSPEGQASSLESIGRSLSRRNHGRSRAVVLAHDHDEAIKGLRAVAAGKQAPNVFSVDGPVTTGPVWVLAGFGAQHRKMGKSLYLRNEVFAAWIEKVDALVQDELGYSVLELILDDAQDYGIETTQVTIFAIQIALGELLRHHGAKPAAVIGQSLGEAASAYFAGGLSLRDATRAICSRSHLMGEGEAMLFGEYIRLMALVEYSADEIREVFSDFPDLEVCVYAAPTQTVIGGPPEQVDAILARAEAEGKFARKFATKGASHTSQMDPLLGELTAELQGIKPTSPTCGIFSTVHEGRYIKPGGEPIHDVEYWKKGLRHSVYFTHGIRNAVDSGHTTFLELAPNPVALMQVALTTADAGLHDAQLIPTLARKQDEVSSMVSTMAQLYVYGHDLDIRTLFSRASGPQDYANIPPTRFKRKEHWLPAHFSGDGSTYMPGTHVALPDGRHVWEYAPRDGNVDLAALVRAAAAHVLPDAQLTAAEQRAVPGDGARLVTTMTRHPGGASVQVHARIDESFTLVYDALVSRAGSESVLPTAVGAATAIAVADGAPVAPETPAEDADAETLSDSLTTRYMPSGMTRWSPDSGETIAERLGLIVGSAMGYEPEDLPWEVPLIELGLDSLMAVRIKNRVEYDFDLPPIQLTAVRDANLYNVEKLIEYAVEHRDEVQQLHEHQKTQTAEEIARAQAELLHGKVGKTEPVDSEAGVALPSPQNGEQPNPTGPALNVDVPPRDAAERVTFATWAIVTGKSPGGIFNELPRLDDEAAAKIAQRLSERAEGPITAEDVLTSSNIEALADKVRTYLEAGQIDGFVRTLRARPEAGGKVPVFVFHPAGGSTVVYEPLLGRLPADTPMYGFERVEGSIEERAQQYVPKLIEMQGDGPYVLVGWSLGGVLAYACAIGLRRLGKDVRFVGLIDAVRAGEEIPQTKEEIRKRWDRYAAFAEKTFNVTIPAIPYEQLEELDDEGQVRFVLDAVSQSGVQIPAGIIEHQRTSYLDNRAIDTAQIQPYDGHVTLYMADRYHDDAIMFEPRYAVRQPDGGWGEYVSDLEVVPIGGEHIQAIDEPIIAKVGEHMSRALGQIEADRTSEVGKQ.

Residues 17–95 (ELTVPEMRQW…SLATRIIEGE (79 aa)) form the Carrier 1 domain. At Ser-55 the chain carries O-(pantetheine 4'-phosphoryl)serine. The 426-residue stretch at 116-541 (RVDIAIVGLS…GANAHVVVRE (426 aa)) folds into the Ketosynthase family 3 (KS3) domain. Cys-287 acts as the Acyl-thioester intermediate; for beta-ketoacyl synthase activity in catalysis. Catalysis depends on for beta-ketoacyl synthase activity residues His-423 and His-463. Residues 548–560 (VEKEPEPEPEPKA) are compositionally biased toward basic and acidic residues. Residues 548–567 (VEKEPEPEPEPKAAAEPAEA) form a disordered region. Residues 713–1034 (VWVLAGFGAQ…MVSTMAQLYV (322 aa)) form an acyltransferase region. The active-site Acyl-ester intermediate; for acyltransferase activity is Ser-801. One can recognise a Carrier 2 domain in the interval 1232–1309 (ETIAERLGLI…KLIEYAVEHR (78 aa)). Ser-1266 is subject to O-(pantetheine 4'-phosphoryl)serine. The interval 1344–1368 (PVDSEAGVALPSPQNGEQPNPTGPA) is disordered. Positions 1470-1563 (PVFVFHPAGG…RFVGLIDAVR (94 aa)) are thioesterase-like. Ser-1533 (for thioesterase-like activity) is an active-site residue.

4'-phosphopantetheine is transferred from CoA to specific serines of apo-Pks13 by PptT.

It participates in lipid metabolism; mycolic acid biosynthesis. With respect to regulation, the presence of FadD32 is necessary for the transfer of the acyl chain from the AMP carrier onto Pks13. Functionally, involved in the biosynthesis of mycolic acids. Forms, with FadD32, the initiation module of the mycolic condensation system. Synthesizes, in coupled reaction with FadD32, the biosynthetic precursors of mycolic acids, alpha-alkyl beta-ketoacids, via the condensation of two long chain fatty acid derivatives, a very long meromycoloyl-AMP and a shorter 2-carboxyacyl-CoA. The acyl chain of the acyl-AMP produced by FadD32 is specifically transferred onto the N-terminal ACP domain of Pks13, and then transferred onto the KS domain. The extender unit carboxyacyl-CoA is specifically loaded onto the AT domain, which catalyzes the covalent attachment of the carboxyacyl chain to its active site, and its subsequent transfer onto the P-pant arm of the C-terminal ACP domain. The KS domain catalyzes the condensation between the two loaded fatty acyl chains to produce an alpha-alkyl beta-ketothioester linked to the C-ACP domain. Then, the thioesterase-like domain acts as a transacylase and is responsible for both the release and the transfer of the alpha-alkyl beta-ketoacyl chain onto a polyol acceptor molecule, particularly trehalose, leading to the formation of the trehalose monomycolate precursor. This is Polyketide synthase Pks13 from Mycobacterium tuberculosis (strain ATCC 25618 / H37Rv).